The chain runs to 67 residues: DNA-directed RNA polymerase subunit omega (67 aa).

Belongs to the RNA polymerase subunit omega family. The RNAP catalytic core consists of 2 alpha, 1 beta, 1 beta' and 1 omega subunit. When a sigma factor is associated with the core the holoenzyme is formed, which can initiate transcription.

The catalysed reaction is RNA(n) + a ribonucleoside 5'-triphosphate = RNA(n+1) + diphosphate. Promotes RNA polymerase assembly. Latches the N- and C-terminal regions of the beta' subunit thereby facilitating its interaction with the beta and alpha subunits. The polypeptide is DNA-directed RNA polymerase subunit omega (Burkholderia ambifaria (strain MC40-6)).